The chain runs to 597 residues: MKNIRNFSIIAHIDHGKSTLSDRLIQTCGGLSDREMEAQVLDSMDLERERGITIKAQSVTLDYKAKDGETYQLNFIDTPGHVDFSYEVSRSLAACEGALLVVDAGQGVEAQTLANCYTAIEMNLEVVPVLNKIDLPAADPERVAEEIEDIVGIDAMEAVRCSAKTGLGIEEVLEEIVHKIPAPEGDPNAPLQALIIDSWFDNYLGVVSLVRVKNGMLKKGDKIKVMSTGQAYNVDRLGIFTPKQVDRTELTTGEVGWVVCAIKDILGAPVGDTLTHQHNPATAALPGFKKVKPQVYAGLFPVSSDDYEAFRDALGKLSLNDASLFYEPETSSALGFGFRCGFLGLLHMEIIQERLEREYDLDLITTAPTVVYEVELTNGEVVYVDSPSKLPPLNNIGDIREPIAECNMLVPQEYLGNVITLCVEKRGVQTNMVYHGNQIALTYDIPMGEVVLDFFDRLKSTSRGYASLDYSFKRFQSANMVRVDIMINGDRVDALALIVHKDNAVYRGRELVEKMKELIPRQQFDIAIQAAIGNQVIARSTVKQLRKNVLAKCYGGDVSRKKKLLQKQKEGKKRMKQLGNVEVPQEAFLAILHVGKD.

Residues 2 to 184 (KNIRNFSIIA…EIVHKIPAPE (183 aa)) enclose the tr-type G domain. Residues 14-19 (DHGKST) and 131-134 (NKID) each bind GTP.

It belongs to the TRAFAC class translation factor GTPase superfamily. Classic translation factor GTPase family. LepA subfamily.

It is found in the cell inner membrane. The enzyme catalyses GTP + H2O = GDP + phosphate + H(+). In terms of biological role, required for accurate and efficient protein synthesis under certain stress conditions. May act as a fidelity factor of the translation reaction, by catalyzing a one-codon backward translocation of tRNAs on improperly translocated ribosomes. Back-translocation proceeds from a post-translocation (POST) complex to a pre-translocation (PRE) complex, thus giving elongation factor G a second chance to translocate the tRNAs correctly. Binds to ribosomes in a GTP-dependent manner. The chain is Elongation factor 4 from Actinobacillus succinogenes (strain ATCC 55618 / DSM 22257 / CCUG 43843 / 130Z).